A 435-amino-acid chain; its full sequence is Matrix remodeling-associated protein 8 (435 aa).

An N-terminal signal peptide occupies residues 1 to 22 (MEIRCKVLVCHIILLHSATVYL). At 23–337 (YSVPASQQNP…QESRLHFFQQ (315 aa)) the chain is on the extracellular side. 2 Ig-like V-type domains span residues 32–158 (PESV…LNIT) and 156–293 (NITK…LSVS). Asn41, Asn120, Asn156, Asn245, and Asn324 each carry an N-linked (GlcNAc...) asparagine glycan. A disulfide bond links Cys54 and Cys138. Cys187 and Cys273 are joined by a disulfide. Residues 338 to 358 (LGYILATLLLFILLLTAVILI) form a helical membrane-spanning segment. The Cytoplasmic segment spans residues 359–435 (TRKHQKRGYA…DLELRKEYCK (77 aa)).

Homodimer in cis. Does not appear to form trans-homodimers.

It localises to the cell membrane. In terms of biological role, transmembrane protein which can modulate activity of various signaling pathways, probably via binding to integrin ITGAV:ITGB3. Mediates heterophilic cell-cell interactions in vitro. This chain is Matrix remodeling-associated protein 8 (mxra8), found in Xenopus laevis (African clawed frog).